The following is a 63-amino-acid chain: Large ribosomal subunit protein bL28 (63 aa).

It belongs to the bacterial ribosomal protein bL28 family.

In Clostridium beijerinckii (strain ATCC 51743 / NCIMB 8052) (Clostridium acetobutylicum), this protein is Large ribosomal subunit protein bL28.